The chain runs to 264 residues: NAD kinase (264 aa).

The active-site Proton acceptor is D45. Residues 45–46 (DG), 121–122 (NE), R147, D149, A184, and Q221 each bind NAD(+).

The protein belongs to the NAD kinase family. It depends on a divalent metal cation as a cofactor.

Its subcellular location is the cytoplasm. The catalysed reaction is NAD(+) + ATP = ADP + NADP(+) + H(+). Its function is as follows. Involved in the regulation of the intracellular balance of NAD and NADP, and is a key enzyme in the biosynthesis of NADP. Catalyzes specifically the phosphorylation on 2'-hydroxyl of the adenosine moiety of NAD to yield NADP. This chain is NAD kinase, found in Leuconostoc mesenteroides subsp. mesenteroides (strain ATCC 8293 / DSM 20343 / BCRC 11652 / CCM 1803 / JCM 6124 / NCDO 523 / NBRC 100496 / NCIMB 8023 / NCTC 12954 / NRRL B-1118 / 37Y).